Consider the following 61-residue polypeptide: Photosystem II reaction center protein K (61 aa).

A propeptide spanning residues 1-24 is cleaved from the precursor; sequence MLNIFSLICICLHSTLYSSSFFLA. A helical transmembrane segment spans residues 36-56; sequence IVDFMPVIPLLFFLLAFVWQA.

It belongs to the PsbK family. In terms of assembly, PSII is composed of 1 copy each of membrane proteins PsbA, PsbB, PsbC, PsbD, PsbE, PsbF, PsbH, PsbI, PsbJ, PsbK, PsbL, PsbM, PsbT, PsbX, PsbY, PsbZ, Psb30/Ycf12, at least 3 peripheral proteins of the oxygen-evolving complex and a large number of cofactors. It forms dimeric complexes.

It is found in the plastid. It localises to the chloroplast thylakoid membrane. Its function is as follows. One of the components of the core complex of photosystem II (PSII). PSII is a light-driven water:plastoquinone oxidoreductase that uses light energy to abstract electrons from H(2)O, generating O(2) and a proton gradient subsequently used for ATP formation. It consists of a core antenna complex that captures photons, and an electron transfer chain that converts photonic excitation into a charge separation. In Eucalyptus globulus subsp. globulus (Tasmanian blue gum), this protein is Photosystem II reaction center protein K.